Here is a 266-residue protein sequence, read N- to C-terminus: 14-3-3 protein homolog (266 aa).

The segment at 154 to 177 (KQAADQAQESYQKATETAEGHSPA) is disordered. Polar residues predominate over residues 158-168 (DQAQESYQKAT).

This sequence belongs to the 14-3-3 family.

The protein is 14-3-3 protein homolog of Neospora caninum (Coccidian parasite).